Reading from the N-terminus, the 710-residue chain is Polyribonucleotide nucleotidyltransferase (710 aa).

Mg(2+) contacts are provided by Asp-489 and Asp-495. Residues Pro-556 to Ile-615 enclose the KH domain. In terms of domain architecture, S1 motif spans Gly-625 to Lys-693. The disordered stretch occupies residues Ser-691 to Asp-710. Residues Pro-700–Asp-710 are compositionally biased toward basic and acidic residues.

Belongs to the polyribonucleotide nucleotidyltransferase family. It depends on Mg(2+) as a cofactor.

It localises to the cytoplasm. The enzyme catalyses RNA(n+1) + phosphate = RNA(n) + a ribonucleoside 5'-diphosphate. In terms of biological role, involved in mRNA degradation. Catalyzes the phosphorolysis of single-stranded polyribonucleotides processively in the 3'- to 5'-direction. In Streptococcus pyogenes serotype M2 (strain MGAS10270), this protein is Polyribonucleotide nucleotidyltransferase.